The primary structure comprises 857 residues: Alanine--tRNA ligase (857 aa).

Zn(2+) is bound by residues His556, His560, Cys658, and His662.

This sequence belongs to the class-II aminoacyl-tRNA synthetase family. Zn(2+) serves as cofactor.

The protein resides in the cytoplasm. The enzyme catalyses tRNA(Ala) + L-alanine + ATP = L-alanyl-tRNA(Ala) + AMP + diphosphate. Catalyzes the attachment of alanine to tRNA(Ala) in a two-step reaction: alanine is first activated by ATP to form Ala-AMP and then transferred to the acceptor end of tRNA(Ala). Also edits incorrectly charged Ser-tRNA(Ala) and Gly-tRNA(Ala) via its editing domain. In Sulfurovum sp. (strain NBC37-1), this protein is Alanine--tRNA ligase.